Here is a 362-residue protein sequence, read N- to C-terminus: MSWGKLSPKANNVMIICHALSGSADVSDWWGPLLGPGKAFDTDKFFVVCMNSLGSPYGTASPVTAKNGDYSQGWYGADFPSTTIRDDVRLHKLVLDKLGVRKVAAVIGGSMGGMHVLEWAFFGKDYVRCIVPAATSSHQSAWAIGWGEAQRHAIRSDVKYKNGRYGFDDPPILGLEAARMTALLTYRSRDSLERRFGRDTGNKKKTQQQDSKTIPNNGTPIHSQGGADETPVAFDRADSNFAAQSYLRYQAKKFSDRFDSNCYIALTNKLDTHDLARGRTRTIAEALSLIQQPTLVLGIRSDGLYTLAEQEQIARAVPNAKLREIVSDDGHDAFLIEWSQLNWLLIGFLHENLPDIMQRAAL.

Residues 12–335 (NVMIICHALS…VSDDGHDAFL (324 aa)) form the AB hydrolase-1 domain. Serine 110 serves as the catalytic Nucleophile. Residues 195–232 (RFGRDTGNKKKTQQQDSKTIPNNGTPIHSQGGADETPV) are disordered. Residues 208 to 222 (QQDSKTIPNNGTPIH) are compositionally biased toward polar residues. Active-site residues include aspartate 302 and histidine 331.

The protein belongs to the AB hydrolase superfamily. MetX family.

The enzyme catalyses L-homoserine + acetyl-CoA = O-acetyl-L-homoserine + CoA. It functions in the pathway mycotoxin biosynthesis. Homoserine O-acetyltransferase; part of the gene cluster that mediates the biosynthesis of fusaric acid, a mycotoxin with low to moderate toxicity to animals and humans, but with high phytotoxic properties. L-aspartate is suggested as fusaric acid amino acid precursor that is activated and further processed to O-acetyl-L-homoserine by cluster enzymes aspartate kinase FUB3 and homoserine O-acetyltransferase FUB5, as well as enzymes of the primary metabolism. The polyketide synthase (PKS) FUB1 generates the triketide trans-2-hexenal which is presumptively released by the hydrolase FUB4 and linked to the NRPS-bound amino acid precursor by NAD(P)-dependent dehydrogenase FUB6. FUB1, FUB4, and the non-canonical NRPS Fub8 may form an enzyme complex. Further processing of the NRPS-bound intermediate might be carried out by FUB6 and the O-acetylhomoserine FUB7, enabling a spontaneous electrocyclization to close the carbon backbone of fusaric acid. Dihydrofusaric acid is likely to be released via reduction by the thioester reductase (TR) domain of FUB8 whereupon the final oxidation to fusaric acid may (also) be performed by the FMN-dependent dehydrogenase FUB9. In Fusarium oxysporum f. sp. lycopersici (strain 4287 / CBS 123668 / FGSC 9935 / NRRL 34936) (Fusarium vascular wilt of tomato), this protein is Homoserine O-acetyltransferase FUB5.